A 2058-amino-acid polypeptide reads, in one-letter code: E3 ubiquitin-protein ligase ubr-1 (2058 aa).

The UBR-type zinc finger occupies 93–164; the sequence is QICGHVFKNG…EGYACANHEK (72 aa). The disordered stretch occupies residues 1107–1175; the sequence is VPEAAPAPEN…TPSEKSETVV (69 aa). Positions 1108–1119 are enriched in low complexity; sequence PEAAPAPENKPA. Composition is skewed to basic and acidic residues over residues 1123–1138 and 1153–1175; these read EEIK…EMRQ and KKIE…ETVV. Residues 1217–1335 form an RING-type; atypical zinc finger; sequence LTCILCQEDE…GEYQCPLCKR (119 aa). 2 disordered regions span residues 1381–1416 and 1475–1499; these read LSSE…DTAN and PAAT…ESGK. The span at 1388–1397 shows a compositional bias: basic residues; the sequence is KKGHSRKRSH. Residues 1398 to 1413 show a composition bias toward basic and acidic residues; the sequence is SERSLLDLEKLSKDPD. Residues 1486-1495 are compositionally biased toward polar residues; that stretch reads GSSSRIPESQ. A helical transmembrane segment spans residues 1695–1715; sequence ILQIDILSLAISLMMTIGWTW.

Belongs to the E3 ubiquitin-protein ligase UBR1-like family. In terms of assembly, interacts with ubc-1. Component of a complex containing at least ced-3, ubr-1 and possibly ate-1. Within complex interacts with ced-3 (via the p17 subunit); this interaction is required for the ced-3-mediated cleavage and subsequent degradation of the heterochronic protein lin-28. Expressed in pharyngeal muscles, body wall muscles and a subset of neurons throughout postembryonic development. Prominently expressed in premotor interneurons, but not expressed in ventral cord motor neurons. Weakly expressed in hypodermal seam cells.

It localises to the membrane. The catalysed reaction is S-ubiquitinyl-[E2 ubiquitin-conjugating enzyme]-L-cysteine + [acceptor protein]-L-lysine = [E2 ubiquitin-conjugating enzyme]-L-cysteine + N(6)-ubiquitinyl-[acceptor protein]-L-lysine.. The protein operates within protein modification; protein ubiquitination. Functionally, E3 ubiquitin-protein ligase which is a component of the N-end rule pathway. Recognizes and binds to proteins bearing specific N-terminal residues that are destabilizing according to the N-end rule, leading to their ubiquitination and subsequent degradation. In complex with ced-3, required for the ced-3-mediated cleavage and subsequent degradation of the heterochronic protein lin-28 to regulate seam cell fate patterning during larval development. Negatively regulates glutamate metabolism through the aspartate aminotransferase got-1.2. Modulation of glutamate levels most likely controls locomotory behavior, in particular backwards locomotion or 'reversals'. The chain is E3 ubiquitin-protein ligase ubr-1 from Caenorhabditis elegans.